The following is a 379-amino-acid chain: Glutamate 5-kinase (379 aa).

Lys15 contributes to the ATP binding site. Substrate is bound by residues Ser59, Asp146, and Asn158. 178–179 (TD) provides a ligand contact to ATP. The region spanning 285-363 (RGAVTVDVGA…SEFERLLGYS (79 aa)) is the PUA domain.

Belongs to the glutamate 5-kinase family.

The protein resides in the cytoplasm. It carries out the reaction L-glutamate + ATP = L-glutamyl 5-phosphate + ADP. Its pathway is amino-acid biosynthesis; L-proline biosynthesis; L-glutamate 5-semialdehyde from L-glutamate: step 1/2. In terms of biological role, catalyzes the transfer of a phosphate group to glutamate to form L-glutamate 5-phosphate. The sequence is that of Glutamate 5-kinase from Paracidovorax citrulli (strain AAC00-1) (Acidovorax citrulli).